Reading from the N-terminus, the 182-residue chain is CDP-diacylglycerol--glycerol-3-phosphate 3-phosphatidyltransferase (182 aa).

At 1-12 the chain is on the cytoplasmic side; it reads MRLNIPTCLTLF. A helical transmembrane segment spans residues 13–37; sequence RLIIVPFFIIVFYLPFSNASFYSAI. At 38–60 the chain is on the periplasmic side; the sequence is IFILAALTDWFDGFLARKLNQTT. A helical membrane pass occupies residues 61–81; it reads CFGAFLDPVADKIIVVIGLIL. Topologically, residues 82 to 86 are cytoplasmic; sequence IIEYF. The chain crosses the membrane as a helical span at residues 87–107; it reads HSFWITIPSLIMIIREIIISS. The Periplasmic portion of the chain corresponds to 108–145; it reads LREWMAEIGKNNLLSVSLISKLKTSIQMLAIFSLLWKE. The chain crosses the membrane as a helical span at residues 146 to 168; it reads TYIIIIIGILSLYVSSILAFLSM. Residues 169–181 lie on the Cytoplasmic side of the membrane; the sequence is LKYFYIAWRDLFR.

It belongs to the CDP-alcohol phosphatidyltransferase class-I family.

The protein localises to the cell inner membrane. The catalysed reaction is a CDP-1,2-diacyl-sn-glycerol + sn-glycerol 3-phosphate = a 1,2-diacyl-sn-glycero-3-phospho-(1'-sn-glycero-3'-phosphate) + CMP + H(+). It functions in the pathway phospholipid metabolism; phosphatidylglycerol biosynthesis; phosphatidylglycerol from CDP-diacylglycerol: step 1/2. Functionally, catalyzes the conversion of cytidine diphosphate diacylglycerol (CDP-DG) and glycerol 3-phosphate into phosphatidylglycerol. Essential for the synthesis of anionic phospholipids, thereby playing a role in balancing the ratio of zwitterionic and anionic phospholipids, which is thought to be important for normal membrane function. In Wigglesworthia glossinidia brevipalpis, this protein is CDP-diacylglycerol--glycerol-3-phosphate 3-phosphatidyltransferase.